A 181-amino-acid polypeptide reads, in one-letter code: SecB-like chaperone Rv1957 (181 aa).

T2 carries the N-acetylthreonine modification.

The protein belongs to the SecB-like family. As to quaternary structure, homotetramer, interacts with antitoxin HigA1.

Functionally, chaperone component of an atypical, type II toxin-antitoxin chaperone (TAC) system. Prevents antitoxin HigA1 aggregation in vitro at a 1:3 chaperone:antitoxin ratio, probably also protects antitoxin HigA1 from protease. Required for neutralization of toxin HigB1 upon ectopic expression in Mycobacterium marinum or E.coli. When expressed in E.coli complements a secB deletion, restores export of OmpA and MBP and inhibits aggregation of proOmpC although it is less efficient than endogenous SecB. Complements the general chaperone function of E.coli SecB less well. The protein is SecB-like chaperone Rv1957 (secBL) of Mycobacterium tuberculosis (strain ATCC 25618 / H37Rv).